Consider the following 271-residue polypeptide: Mannosyl-3-phosphoglycerate phosphatase (271 aa).

The Nucleophile role is filled by Asp13. Asp13, Asp15, and Asp214 together coordinate Mg(2+).

The protein belongs to the HAD-like hydrolase superfamily. MPGP family. Mg(2+) is required as a cofactor.

The protein localises to the cytoplasm. The enzyme catalyses 2-O-(alpha-D-mannosyl)-3-phosphoglycerate + H2O = (2R)-2-O-(alpha-D-mannosyl)-glycerate + phosphate. The chain is Mannosyl-3-phosphoglycerate phosphatase (yedP) from Shigella boydii serotype 4 (strain Sb227).